The chain runs to 522 residues: GMP synthase [glutamine-hydrolyzing] (522 aa).

In terms of domain architecture, Glutamine amidotransferase type-1 spans 9-204; that stretch reads KILILDFGAQ…VVDICGCQTL (196 aa). The Nucleophile role is filled by Cys86. Residues His178 and Glu180 contribute to the active site. Residues 205–397 form the GMPS ATP-PPase domain; that stretch reads WTAANIIEDQ…LGLPHAMVYR (193 aa). 232–238 lines the ATP pocket; that stretch reads SGGVDSS.

Homodimer.

The enzyme catalyses XMP + L-glutamine + ATP + H2O = GMP + L-glutamate + AMP + diphosphate + 2 H(+). It participates in purine metabolism; GMP biosynthesis; GMP from XMP (L-Gln route): step 1/1. Catalyzes the synthesis of GMP from XMP. The protein is GMP synthase [glutamine-hydrolyzing] of Xylella fastidiosa (strain M12).